The sequence spans 244 residues: uncharacterized protein (244 aa).

The signal sequence occupies residues 1-17 (MVLHVITALLSIGLCYG).

In terms of tissue distribution, component of the acid-soluble and acid-insoluble organic matrix of prismatic shell layers (at protein level).

The protein resides in the secreted. This is an uncharacterized protein from Haliotis asinina (Donkey's ear abalone).